The sequence spans 938 residues: Isoleucine--tRNA ligase (938 aa).

A 'HIGH' region motif is present at residues P58 to H68. An N6-acetyllysine modification is found at K183. E561 provides a ligand contact to L-isoleucyl-5'-AMP. The 'KMSKS' region signature appears at K602–S606. K605 lines the ATP pocket. Zn(2+) contacts are provided by C901, C904, C921, and C924.

It belongs to the class-I aminoacyl-tRNA synthetase family. IleS type 1 subfamily. As to quaternary structure, monomer. It depends on Zn(2+) as a cofactor.

Its subcellular location is the cytoplasm. The enzyme catalyses tRNA(Ile) + L-isoleucine + ATP = L-isoleucyl-tRNA(Ile) + AMP + diphosphate. Catalyzes the attachment of isoleucine to tRNA(Ile). As IleRS can inadvertently accommodate and process structurally similar amino acids such as valine, to avoid such errors it has two additional distinct tRNA(Ile)-dependent editing activities. One activity is designated as 'pretransfer' editing and involves the hydrolysis of activated Val-AMP. The other activity is designated 'posttransfer' editing and involves deacylation of mischarged Val-tRNA(Ile). The sequence is that of Isoleucine--tRNA ligase from Escherichia coli O45:K1 (strain S88 / ExPEC).